A 58-amino-acid chain; its full sequence is Large ribosomal subunit protein bL32c (58 aa).

It belongs to the bacterial ribosomal protein bL32 family.

It localises to the plastid. The protein localises to the chloroplast. The chain is Large ribosomal subunit protein bL32c (rpl32) from Adiantum capillus-veneris (Maidenhair fern).